The primary structure comprises 239 residues: tRNA (guanine-N(7)-)-methyltransferase (239 aa).

S-adenosyl-L-methionine contacts are provided by E69, E94, D121, and D144. The active site involves D144. K148 contributes to the substrate binding site. Positions 150–155 (RHNKRR) are interaction with RNA. Residues D180 and 217 to 220 (TKFE) contribute to the substrate site.

The protein belongs to the class I-like SAM-binding methyltransferase superfamily. TrmB family. In terms of assembly, monomer.

It carries out the reaction guanosine(46) in tRNA + S-adenosyl-L-methionine = N(7)-methylguanosine(46) in tRNA + S-adenosyl-L-homocysteine. Its pathway is tRNA modification; N(7)-methylguanine-tRNA biosynthesis. Catalyzes the formation of N(7)-methylguanine at position 46 (m7G46) in tRNA. This Salmonella typhi protein is tRNA (guanine-N(7)-)-methyltransferase.